We begin with the raw amino-acid sequence, 887 residues long: Lon protease homolog 2, peroxisomal (887 aa).

Residues 11-256 (LGILAFRNKV…KATELVDRHL (246 aa)) enclose the Lon N-terminal domain. Positions 72-101 (YPGGGTDSGERNVKSQPGLSDSRKADGKSQ) are disordered. Position 409–416 (409–416 (GPPGVGKT)) interacts with ATP. The Lon proteolytic domain maps to 693–878 (VSNPGVSVGL…EVLEQAFEGG (186 aa)). Residues serine 784 and lysine 827 contribute to the active site. Positions 885–887 (ARL) match the Microbody targeting signal motif.

This sequence belongs to the peptidase S16 family.

It localises to the peroxisome matrix. The enzyme catalyses Hydrolysis of proteins in presence of ATP.. In terms of biological role, ATP-dependent serine protease that mediates the selective degradation of misfolded and unassembled polypeptides in the peroxisomal matrix. Necessary for type 2 peroxisome targeting signal (PTS2)-containing protein processing and facilitates peroxisome matrix protein import. The sequence is that of Lon protease homolog 2, peroxisomal from Spinacia oleracea (Spinach).